The following is a 331-amino-acid chain: NADH-quinone oxidoreductase subunit H (331 aa).

8 helical membrane passes run 13–33 (FLISSATVIFLVLNIAAVLTL), 80–100 (WVFLAAPIAMFLPAAAVWLVI), 113–133 (IGLVYFFAITSIGALGVIMAG), 159–179 (LILSLLGVAMLTGSLSMVDIV), 183–203 (AGGFWNWIIWPQLPMFLAFFV), 249–269 (VMSAVASTLFLGGWQPPLPFL), 273–293 (VFNWLWLGIKTTLLIFVFQWI), and 311–331 (KILVPVTILWLFVTAGAMLVI).

Belongs to the complex I subunit 1 family. NDH-1 is composed of 14 different subunits. Subunits NuoA, H, J, K, L, M, N constitute the membrane sector of the complex.

Its subcellular location is the cell membrane. The catalysed reaction is a quinone + NADH + 5 H(+)(in) = a quinol + NAD(+) + 4 H(+)(out). In terms of biological role, NDH-1 shuttles electrons from NADH, via FMN and iron-sulfur (Fe-S) centers, to quinones in the respiratory chain. The immediate electron acceptor for the enzyme in this species is believed to be ubiquinone. Couples the redox reaction to proton translocation (for every two electrons transferred, four hydrogen ions are translocated across the cytoplasmic membrane), and thus conserves the redox energy in a proton gradient. This subunit may bind ubiquinone. This chain is NADH-quinone oxidoreductase subunit H, found in Rubrobacter xylanophilus (strain DSM 9941 / JCM 11954 / NBRC 16129 / PRD-1).